Consider the following 163-residue polypeptide: Nucleotide-binding protein BSU11020 (163 aa).

The protein belongs to the YajQ family.

Functionally, nucleotide-binding protein. The chain is Nucleotide-binding protein BSU11020 (yitK) from Bacillus subtilis (strain 168).